The chain runs to 84 residues: MKVTLIAILTCAAVLVLHTTAAEELEESQLMEVGMPDTELAAVDEERLFECSVSCEIEKEGNKDCKKKKRKGGWKCKFNMCVKV.

The signal sequence occupies residues 1 to 22 (MKVTLIAILTCAAVLVLHTTAA). The propeptide occupies 23 to 47 (EELEESQLMEVGMPDTELAAVDEER). Disulfide bonds link cysteine 51–cysteine 65 and cysteine 55–cysteine 76.

The protein belongs to the neurotoxin 12 (Hwtx-2) family. 02 (Hwtx-2) subfamily. As to expression, expressed by the venom gland.

It localises to the secreted. In terms of biological role, postsynaptic neurotoxin. The protein is U4-theraphotoxin-Hhn1aa of Cyriopagopus hainanus (Chinese bird spider).